A 510-amino-acid polypeptide reads, in one-letter code: Protein ERGIC-53 (510 aa).

The first 30 residues, Met1–Gly30, serve as a signal peptide directing secretion. Residues Asp31–Ser477 lie on the Lumenal side of the membrane. The region spanning Arg44–Leu267 is the L-type lectin-like domain. Residues Ser88 and Asp121 each coordinate a carbohydrate. Residues Asp152, Phe154, and Asn156 each coordinate Ca(2+). Residues Asn156 and His178 each coordinate a carbohydrate. Asp181 is a binding site for Ca(2+). Cys190 and Cys230 are oxidised to a cystine. Gly251–Leu253 provides a ligand contact to a carbohydrate. At Ser425 the chain carries Phosphoserine. A helical transmembrane segment spans residues Thr478–Tyr498. The Cytoplasmic portion of the chain corresponds to Arg499–Phe510. Residues Arg499–Phe510 form a mediates interaction with RAB3GAP1, RAB3GAP2 and UBXN6 region. Residues Phe509 to Phe510 carry the ER export motif motif.

Exists both as a covalent disulfide-linked homohexamer, and a complex of three disulfide-linked dimers non-covalently kept together. Interacts with MCFD2. May interact with TMEM115. Interacts with RAB3GAP1 and RAB3GAP2. Interacts with UBXN6. Interacts with SERPINA1/alpha1-antitrypsin. Interacts with BET1. Post-translationally, the N-terminal may be partly blocked. Ubiquitous.

It is found in the endoplasmic reticulum-Golgi intermediate compartment membrane. The protein localises to the golgi apparatus membrane. Its subcellular location is the endoplasmic reticulum membrane. Its function is as follows. Mannose-specific lectin. May recognize sugar residues of glycoproteins, glycolipids, or glycosylphosphatidyl inositol anchors and may be involved in the sorting or recycling of proteins, lipids, or both. The LMAN1-MCFD2 complex forms a specific cargo receptor for the ER-to-Golgi transport of selected proteins. The protein is Protein ERGIC-53 (LMAN1) of Homo sapiens (Human).